A 174-amino-acid chain; its full sequence is Probable inosine/xanthosine triphosphatase (174 aa).

A Mg(2+)-binding site is contributed by Asp63.

It belongs to the YjjX NTPase family. In terms of assembly, homodimer. It depends on Mg(2+) as a cofactor. Mn(2+) serves as cofactor.

It catalyses the reaction XTP + H2O = XDP + phosphate + H(+). The enzyme catalyses ITP + H2O = IDP + phosphate + H(+). Phosphatase that hydrolyzes non-canonical purine nucleotides such as XTP and ITP to their respective diphosphate derivatives. Probably excludes non-canonical purines from DNA/RNA precursor pool, thus preventing their incorporation into DNA/RNA and avoiding chromosomal lesions. The chain is Probable inosine/xanthosine triphosphatase from Methanocella arvoryzae (strain DSM 22066 / NBRC 105507 / MRE50).